We begin with the raw amino-acid sequence, 367 residues long: Indole glucosinolate O-methyltransferase 5 (367 aa).

5 residues coordinate S-adenosyl-L-homocysteine: G209, D232, D252, M253, and K266. Residue H270 is the Proton acceptor of the active site.

This sequence belongs to the class I-like SAM-binding methyltransferase superfamily. Cation-independent O-methyltransferase family.

Its pathway is secondary metabolite biosynthesis. Involved in indole glucosinolate biosynthesis. Catalyzes methoxylation reactions of the glucosinolate indole ring. Converts the hydroxy intermediates 4-hydroxy-indol-3-yl-methylglucosinolate (4OH-I3M) and 1-hydroxy-indol-3-yl-methylglucosinolate (1OH-I3M) to 4-methoxy-indol-3-yl-methylglucosinolate (4MO-I3M) and 1-methoxy-indol-3-yl-methylglucosinolate, respectively. The sequence is that of Indole glucosinolate O-methyltransferase 5 from Arabidopsis thaliana (Mouse-ear cress).